The primary structure comprises 320 residues: Biotin synthase (320 aa).

Positions 39 to 267 (NAIQLATLLS…KARVRLSAGR (229 aa)) constitute a Radical SAM core domain. [4Fe-4S] cluster contacts are provided by cysteine 54, cysteine 58, and cysteine 61. [2Fe-2S] cluster contacts are provided by cysteine 98, cysteine 130, cysteine 190, and arginine 262.

Belongs to the radical SAM superfamily. Biotin synthase family. Homodimer. Requires [4Fe-4S] cluster as cofactor. [2Fe-2S] cluster is required as a cofactor.

It catalyses the reaction (4R,5S)-dethiobiotin + (sulfur carrier)-SH + 2 reduced [2Fe-2S]-[ferredoxin] + 2 S-adenosyl-L-methionine = (sulfur carrier)-H + biotin + 2 5'-deoxyadenosine + 2 L-methionine + 2 oxidized [2Fe-2S]-[ferredoxin]. Its pathway is cofactor biosynthesis; biotin biosynthesis; biotin from 7,8-diaminononanoate: step 2/2. Catalyzes the conversion of dethiobiotin (DTB) to biotin by the insertion of a sulfur atom into dethiobiotin via a radical-based mechanism. This Synechococcus elongatus (strain ATCC 33912 / PCC 7942 / FACHB-805) (Anacystis nidulans R2) protein is Biotin synthase.